The primary structure comprises 124 residues: MNFLPSTVLLLSFVVAIISGSFSSISEEWKAVCECNLSKLNNHAKTGNCKTTALWKVTSDTNCTASEYLKITVFPANDDPLNRVEQCTMTPCDQTEKTPADCNVAFSAAKLAEIAKEEKSKMII.

Residues 1–23 form the signal peptide; the sequence is MNFLPSTVLLLSFVVAIISGSFS. 2 N-linked (GlcNAc...) asparagine glycosylation sites follow: Asn36 and Asn62.

This sequence belongs to the UPF0375 family.

It is found in the secreted. This chain is UPF0375 protein Y45F10C.4, found in Caenorhabditis elegans.